Reading from the N-terminus, the 633-residue chain is Threonine--tRNA ligase (633 aa).

Residues 1–61 (MINIHFSNNL…IENCTFEVIT (61 aa)) form the TGS domain. The catalytic stretch occupies residues 242-533 (DHRKIGRELE…LIEHHSGKFP (292 aa)). 3 residues coordinate Zn(2+): C333, H384, and H510.

Belongs to the class-II aminoacyl-tRNA synthetase family. As to quaternary structure, homodimer. The cofactor is Zn(2+).

It localises to the cytoplasm. The catalysed reaction is tRNA(Thr) + L-threonine + ATP = L-threonyl-tRNA(Thr) + AMP + diphosphate + H(+). In terms of biological role, catalyzes the attachment of threonine to tRNA(Thr) in a two-step reaction: L-threonine is first activated by ATP to form Thr-AMP and then transferred to the acceptor end of tRNA(Thr). Also edits incorrectly charged L-seryl-tRNA(Thr). The protein is Threonine--tRNA ligase of Ehrlichia chaffeensis (strain ATCC CRL-10679 / Arkansas).